A 419-amino-acid chain; its full sequence is UDP-N-acetylglucosamine 1-carboxyvinyltransferase (419 aa).

Residue 23–24 (KN) coordinates phosphoenolpyruvate. Residue R92 coordinates UDP-N-acetyl-alpha-D-glucosamine. The active-site Proton donor is C116. C116 is subject to 2-(S-cysteinyl)pyruvic acid O-phosphothioketal. Residues 121–125 (RPVDL), 161–164 (KVSV), D306, and I328 each bind UDP-N-acetyl-alpha-D-glucosamine.

Belongs to the EPSP synthase family. MurA subfamily.

Its subcellular location is the cytoplasm. It carries out the reaction phosphoenolpyruvate + UDP-N-acetyl-alpha-D-glucosamine = UDP-N-acetyl-3-O-(1-carboxyvinyl)-alpha-D-glucosamine + phosphate. Its pathway is cell wall biogenesis; peptidoglycan biosynthesis. Its function is as follows. Cell wall formation. Adds enolpyruvyl to UDP-N-acetylglucosamine. This chain is UDP-N-acetylglucosamine 1-carboxyvinyltransferase, found in Vibrio cholerae serotype O1 (strain ATCC 39541 / Classical Ogawa 395 / O395).